The chain runs to 396 residues: Ribosomal RNA large subunit methyltransferase I (396 aa).

The 78-residue stretch at 2 to 79 folds into the PUA domain; that stretch reads TSAVYLQAGR…EKEVIDQHFF (78 aa).

Belongs to the methyltransferase superfamily. RlmI family.

The protein localises to the cytoplasm. The enzyme catalyses cytidine(1962) in 23S rRNA + S-adenosyl-L-methionine = 5-methylcytidine(1962) in 23S rRNA + S-adenosyl-L-homocysteine + H(+). In terms of biological role, specifically methylates the cytosine at position 1962 (m5C1962) of 23S rRNA. This chain is Ribosomal RNA large subunit methyltransferase I, found in Pseudoalteromonas translucida (strain TAC 125).